The primary structure comprises 421 residues: Eukaryotic translation initiation factor 3 subunit E (421 aa).

One can recognise a PCI domain in the interval 215–394 (FFQNDTKGKD…STVILNHPSV (180 aa)).

The protein belongs to the eIF-3 subunit E family. Component of the eukaryotic translation initiation factor 3 (eIF-3) complex.

It is found in the cytoplasm. Component of the eukaryotic translation initiation factor 3 (eIF-3) complex, which is involved in protein synthesis of a specialized repertoire of mRNAs and, together with other initiation factors, stimulates binding of mRNA and methionyl-tRNAi to the 40S ribosome. The eIF-3 complex specifically targets and initiates translation of a subset of mRNAs involved in cell proliferation. In Yarrowia lipolytica (strain CLIB 122 / E 150) (Yeast), this protein is Eukaryotic translation initiation factor 3 subunit E.